A 370-amino-acid chain; its full sequence is Adaptive-response sensory kinase SasA (370 aa).

Residues 152–365 (MVAHELRTPL…CFYLTVPVWQ (214 aa)) enclose the Histidine kinase domain. H155 is subject to Phosphohistidine; by autocatalysis.

Homooligomerizes. Interacts with KaiC. Participates in the KaiBC complex, whose core is composed of a KaiC homohexamer and 6 KaiB.

It catalyses the reaction ATP + protein L-histidine = ADP + protein N-phospho-L-histidine.. Functionally, member of the two-component regulatory system SasA/RpaA involved in genome-wide circadian gene expression. One of several clock output pathways. Participates in the Kai clock protein complex, the main circadian regulator in cyanobacteria, via its interaction with KaiC. KaiC enhances the autophosphorylation activity of SasA, which then transfers its phosphate group to RpaA to activate it. In addition to its output function, recruits fold-shifted KaiB (KaiB(fs)) to KaiC to cooperatively form the KaiB(6):KaiC(6) complex (independent of SasA kinase activity). Required for robustness of the circadian rhythm of gene expression and is involved in clock output, also required for adaptation to light/dark cycles. This chain is Adaptive-response sensory kinase SasA, found in Prochlorococcus marinus (strain MIT 9303).